The sequence spans 155 residues: DNA gyrase inhibitor (155 aa).

It belongs to the DNA gyrase inhibitor family. As to quaternary structure, interacts with DNA gyrase.

It localises to the cytoplasm. Functionally, inhibits the supercoiling activity of DNA gyrase. Acts by inhibiting DNA gyrase at an early step, prior to (or at the step of) binding of DNA by the gyrase. It protects cells against toxins that target DNA gyrase, by inhibiting activity of these toxins and reducing the formation of lethal double-strand breaks in the cell. The polypeptide is DNA gyrase inhibitor (Edwardsiella piscicida).